A 336-amino-acid chain; its full sequence is Fructose-1,6-bisphosphatase class 1 (336 aa).

Mg(2+)-binding residues include Glu90, Asp112, Leu114, and Asp115. Residues 115 to 118 (DGSS), Asn211, and Lys277 each bind substrate. A Mg(2+)-binding site is contributed by Glu283.

The protein belongs to the FBPase class 1 family. As to quaternary structure, homotetramer. It depends on Mg(2+) as a cofactor.

The protein resides in the cytoplasm. The catalysed reaction is beta-D-fructose 1,6-bisphosphate + H2O = beta-D-fructose 6-phosphate + phosphate. It participates in carbohydrate biosynthesis; gluconeogenesis. In Pseudomonas fluorescens (strain Pf0-1), this protein is Fructose-1,6-bisphosphatase class 1.